Reading from the N-terminus, the 188-residue chain is Small ribosomal subunit protein uS12m (188 aa).

Residues 1 to 63 (MSGGRWISNL…AAFRLPQSSG (63 aa)) constitute a mitochondrion transit peptide.

This sequence belongs to the universal ribosomal protein uS12 family.

The protein resides in the mitochondrion. Functionally, protein S12 is involved in the translation initiation step. This Oenothera elata subsp. hookeri (Hooker's evening primrose) protein is Small ribosomal subunit protein uS12m (RPS12).